Here is a 132-residue protein sequence, read N- to C-terminus: Small ribosomal subunit protein uS8 (132 aa).

The protein belongs to the universal ribosomal protein uS8 family. In terms of assembly, part of the 30S ribosomal subunit. Contacts proteins S5 and S12.

Functionally, one of the primary rRNA binding proteins, it binds directly to 16S rRNA central domain where it helps coordinate assembly of the platform of the 30S subunit. This chain is Small ribosomal subunit protein uS8, found in Staphylococcus epidermidis (strain ATCC 35984 / DSM 28319 / BCRC 17069 / CCUG 31568 / BM 3577 / RP62A).